Reading from the N-terminus, the 193-residue chain is Ion-translocating oxidoreductase complex subunit A (193 aa).

6 consecutive transmembrane segments (helical) span residues 4 to 24 (LLLI…RFLG), 39 to 59 (LGMG…TWVL), 72 to 92 (LQTI…EMIV), 102 to 122 (SLGI…LAVL), 134 to 154 (LVFA…FAGL), and 171 to 191 (PIEL…AGLV).

The protein belongs to the NqrDE/RnfAE family. As to quaternary structure, the complex is composed of six subunits: RnfA, RnfB, RnfC, RnfD, RnfE and RnfG.

The protein localises to the cell inner membrane. Part of a membrane-bound complex that couples electron transfer with translocation of ions across the membrane. The chain is Ion-translocating oxidoreductase complex subunit A from Syntrophotalea carbinolica (strain DSM 2380 / NBRC 103641 / GraBd1) (Pelobacter carbinolicus).